A 159-amino-acid polypeptide reads, in one-letter code: UPF0201 protein MK0399 (159 aa).

This sequence belongs to the UPF0201 family.

The polypeptide is UPF0201 protein MK0399 (Methanopyrus kandleri (strain AV19 / DSM 6324 / JCM 9639 / NBRC 100938)).